We begin with the raw amino-acid sequence, 1380 residues long: Inverted formin-2 (1380 aa).

The GBD/FH3 domain occupies Met-1–Gln-330. 2 disordered regions span residues Leu-341–Pro-391 and Ile-440–Leu-541. A compositionally biased stretch (basic residues) spans Thr-343–Lys-352. The segment covering Gln-367–Pro-385 has biased composition (basic and acidic residues). The region spanning Val-432–Ala-592 is the FH1 domain. 2 stretches are compositionally biased toward pro residues: residues Leu-446–Pro-470 and Thr-478–Leu-541. An FH2 domain is found at Tyr-593–Asp-981. 2 coiled-coil regions span residues Leu-879–Asp-930 and Leu-956–Asn-991. Residues Asp-1009–Thr-1024 form the WH2 domain. Disordered regions lie at residues Lys-1026–Asp-1049, His-1188–Ala-1244, and Phe-1260–Gln-1380. 3 stretches are compositionally biased toward polar residues: residues Gly-1206–Ala-1244, Phe-1260–Arg-1284, and Thr-1294–Ser-1303. Residues Glu-1306–Gly-1322 are compositionally biased toward basic and acidic residues. Residues Ser-1328–Ser-1339 show a composition bias toward low complexity. Residues Val-1345–Ser-1359 are compositionally biased toward basic residues.

The protein belongs to the formin homology family.

The polypeptide is Inverted formin-2 (inf2) (Xenopus tropicalis (Western clawed frog)).